A 142-amino-acid chain; its full sequence is Large ribosomal subunit protein uL11 (142 aa).

Belongs to the universal ribosomal protein uL11 family. Part of the ribosomal stalk of the 50S ribosomal subunit. Interacts with L10 and the large rRNA to form the base of the stalk. L10 forms an elongated spine to which L12 dimers bind in a sequential fashion forming a multimeric L10(L12)X complex. In terms of processing, one or more lysine residues are methylated.

In terms of biological role, forms part of the ribosomal stalk which helps the ribosome interact with GTP-bound translation factors. This Photobacterium profundum (strain SS9) protein is Large ribosomal subunit protein uL11.